A 223-amino-acid polypeptide reads, in one-letter code: Endonuclease V (223 aa).

Mg(2+) contacts are provided by Asp35 and Asp103.

Belongs to the endonuclease V family. The cofactor is Mg(2+).

It localises to the cytoplasm. It catalyses the reaction Endonucleolytic cleavage at apurinic or apyrimidinic sites to products with a 5'-phosphate.. Functionally, DNA repair enzyme involved in the repair of deaminated bases. Selectively cleaves double-stranded DNA at the second phosphodiester bond 3' to a deoxyinosine leaving behind the intact lesion on the nicked DNA. The polypeptide is Endonuclease V (Klebsiella pneumoniae subsp. pneumoniae (strain ATCC 700721 / MGH 78578)).